The following is an 86-amino-acid chain: DNA-directed RNA polymerase subunit Rpo11 (86 aa).

The protein belongs to the archaeal Rpo11/eukaryotic RPB11/RPC19 RNA polymerase subunit family. In terms of assembly, part of the RNA polymerase complex.

The protein localises to the cytoplasm. It catalyses the reaction RNA(n) + a ribonucleoside 5'-triphosphate = RNA(n+1) + diphosphate. DNA-dependent RNA polymerase (RNAP) catalyzes the transcription of DNA into RNA using the four ribonucleoside triphosphates as substrates. The polypeptide is DNA-directed RNA polymerase subunit Rpo11 (Archaeoglobus fulgidus (strain ATCC 49558 / DSM 4304 / JCM 9628 / NBRC 100126 / VC-16)).